Consider the following 466-residue polypeptide: 3-isopropylmalate dehydratase large subunit (466 aa).

Residues cysteine 347, cysteine 407, and cysteine 410 each coordinate [4Fe-4S] cluster.

Belongs to the aconitase/IPM isomerase family. LeuC type 1 subfamily. Heterodimer of LeuC and LeuD. [4Fe-4S] cluster is required as a cofactor.

The catalysed reaction is (2R,3S)-3-isopropylmalate = (2S)-2-isopropylmalate. The protein operates within amino-acid biosynthesis; L-leucine biosynthesis; L-leucine from 3-methyl-2-oxobutanoate: step 2/4. In terms of biological role, catalyzes the isomerization between 2-isopropylmalate and 3-isopropylmalate, via the formation of 2-isopropylmaleate. The chain is 3-isopropylmalate dehydratase large subunit from Salmonella paratyphi A (strain ATCC 9150 / SARB42).